Here is a 471-residue protein sequence, read N- to C-terminus: tRNA-2-methylthio-N(6)-dimethylallyladenosine synthase (471 aa).

In terms of domain architecture, MTTase N-terminal spans K36–T154. Residues C45, C81, C115, C191, C195, and C198 each contribute to the [4Fe-4S] cluster site. Positions R177–K407 constitute a Radical SAM core domain. A TRAM domain is found at Q410–I471.

The protein belongs to the methylthiotransferase family. MiaB subfamily. As to quaternary structure, monomer. Requires [4Fe-4S] cluster as cofactor.

It localises to the cytoplasm. The enzyme catalyses N(6)-dimethylallyladenosine(37) in tRNA + (sulfur carrier)-SH + AH2 + 2 S-adenosyl-L-methionine = 2-methylsulfanyl-N(6)-dimethylallyladenosine(37) in tRNA + (sulfur carrier)-H + 5'-deoxyadenosine + L-methionine + A + S-adenosyl-L-homocysteine + 2 H(+). Its function is as follows. Catalyzes the methylthiolation of N6-(dimethylallyl)adenosine (i(6)A), leading to the formation of 2-methylthio-N6-(dimethylallyl)adenosine (ms(2)i(6)A) at position 37 in tRNAs that read codons beginning with uridine. The chain is tRNA-2-methylthio-N(6)-dimethylallyladenosine synthase from Caldicellulosiruptor saccharolyticus (strain ATCC 43494 / DSM 8903 / Tp8T 6331).